A 338-amino-acid chain; its full sequence is Phosphate acyltransferase (338 aa).

This sequence belongs to the PlsX family. As to quaternary structure, homodimer. Probably interacts with PlsY.

The protein resides in the cytoplasm. The enzyme catalyses a fatty acyl-[ACP] + phosphate = an acyl phosphate + holo-[ACP]. Its pathway is lipid metabolism; phospholipid metabolism. Its function is as follows. Catalyzes the reversible formation of acyl-phosphate (acyl-PO(4)) from acyl-[acyl-carrier-protein] (acyl-ACP). This enzyme utilizes acyl-ACP as fatty acyl donor, but not acyl-CoA. The chain is Phosphate acyltransferase from Salinibacter ruber (strain DSM 13855 / M31).